The sequence spans 68 residues: Large ribosomal subunit protein uL29 (68 aa).

It belongs to the universal ribosomal protein uL29 family.

This chain is Large ribosomal subunit protein uL29, found in Rhodospirillum rubrum (strain ATCC 11170 / ATH 1.1.1 / DSM 467 / LMG 4362 / NCIMB 8255 / S1).